A 377-amino-acid polypeptide reads, in one-letter code: Nitric oxide reductase FlRd-NAD(+) reductase (377 aa).

The protein belongs to the FAD-dependent oxidoreductase family. Requires FAD as cofactor.

It is found in the cytoplasm. The catalysed reaction is 2 reduced [nitric oxide reductase rubredoxin domain] + NAD(+) + H(+) = 2 oxidized [nitric oxide reductase rubredoxin domain] + NADH. The protein operates within nitrogen metabolism; nitric oxide reduction. Its function is as follows. One of at least two accessory proteins for anaerobic nitric oxide (NO) reductase. Reduces the rubredoxin moiety of NO reductase. The sequence is that of Nitric oxide reductase FlRd-NAD(+) reductase from Escherichia coli O6:K15:H31 (strain 536 / UPEC).